The sequence spans 172 residues: C-phycocyanin beta subunit (172 aa).

Asparagine 72 bears the N4-methylasparagine mark. Residues cysteine 82 and cysteine 153 each contribute to the (2R,3E)-phycocyanobilin site.

It belongs to the phycobiliprotein family. In terms of assembly, the alpha and beta subunits exhibit high affinity for one another and form heterodimers. These heterodimers form heterohexamers of 3 alpha and 3 beta subunits which, in turn, aggregate into a heterododecamer consisting of 2 heterohexamers. Post-translationally, contains two covalently linked bilin chromophores.

It localises to the cellular thylakoid membrane. In terms of biological role, light-harvesting photosynthetic bile pigment-protein from the phycobiliprotein complex (phycobilisome, PBS). Phycocyanin is the major phycobiliprotein in the PBS rod. This Arthrospira platensis (Spirulina platensis) protein is C-phycocyanin beta subunit (cpcB).